A 752-amino-acid polypeptide reads, in one-letter code: Photosystem I P700 chlorophyll a apoprotein A1 (752 aa).

8 helical membrane-spanning segments follow: residues I73 to A96, L159 to H182, L198 to A222, I294 to Y312, W349 to Y372, L388 to V414, A436 to H458, and F533 to L551. 2 residues coordinate [4Fe-4S] cluster: C575 and C584. The next 2 membrane-spanning stretches (helical) occupy residues H591–W612 and L666–F688. H677 provides a ligand contact to chlorophyll a'. 2 residues coordinate chlorophyll a: M685 and Y693. Residue W694 coordinates phylloquinone. The chain crosses the membrane as a helical span at residues A726–A746.

The protein belongs to the PsaA/PsaB family. The PsaA/B heterodimer binds the P700 chlorophyll special pair and subsequent electron acceptors. PSI consists of a core antenna complex that captures photons, and an electron transfer chain that converts photonic excitation into a charge separation. The cyanobacterial PSI reaction center is composed of one copy each of PsaA,B,C,D,E,F,I,J,K,L,M and X, and forms trimeric complexes. Requires PSI electron transfer chain: 5 chlorophyll a, 1 chlorophyll a', 2 phylloquinones and 3 4Fe-4S clusters. PSI core antenna: 90 chlorophyll a, 22 carotenoids, 3 phospholipids and 1 galactolipid. P700 is a chlorophyll a/chlorophyll a' dimer, A0 is one or more chlorophyll a, A1 is one or both phylloquinones and FX is a shared 4Fe-4S iron-sulfur center. as cofactor.

It is found in the cellular thylakoid membrane. It carries out the reaction reduced [plastocyanin] + hnu + oxidized [2Fe-2S]-[ferredoxin] = oxidized [plastocyanin] + reduced [2Fe-2S]-[ferredoxin]. PsaA and PsaB bind P700, the primary electron donor of photosystem I (PSI), as well as the electron acceptors A0, A1 and FX. PSI is a plastocyanin/cytochrome c6-ferredoxin oxidoreductase, converting photonic excitation into a charge separation, which transfers an electron from the donor P700 chlorophyll pair to the spectroscopically characterized acceptors A0, A1, FX, FA and FB in turn. Oxidized P700 is reduced on the lumenal side of the thylakoid membrane by plastocyanin or cytochrome c6. The polypeptide is Photosystem I P700 chlorophyll a apoprotein A1 (Nostoc punctiforme (strain ATCC 29133 / PCC 73102)).